Consider the following 959-residue polypeptide: Translation initiation factor IF-2 (959 aa).

Basic and acidic residues predominate over residues 1-10; it reads MSDKTNDDKT. The disordered stretch occupies residues 1 to 374; it reads MSDKTNDDKT…SQMQETREKI (374 aa). Over residues 27–37 the composition is skewed to polar residues; the sequence is EQSTVRQNFSH. Composition is skewed to low complexity over residues 63–118 and 128–138; these read AAAA…VTKP and QRPGGQQAQRP. 2 stretches are compositionally biased toward basic and acidic residues: residues 154–225 and 232–241; these read SEMD…EAAK and ARSERRDDAR. Positions 246–284 are enriched in low complexity; the sequence is GARPQQAGRPQGGRPQPAGRPQQGSPRPAPIIADAAPIA. A compositionally biased stretch (basic and acidic residues) spans 318–333; the sequence is PEVRAPKVVKGEDDRR. The region spanning 457–626 is the tr-type G domain; that stretch reads SRPPVVTIMG…LLQAEMLDLK (170 aa). Positions 466–473 are G1; sequence GHVDHGKT. GTP is bound at residue 466–473; the sequence is GHVDHGKT. The interval 491–495 is G2; sequence GITQH. Residues 512–515 form a G3 region; that stretch reads DTPG. GTP-binding positions include 512-516 and 566-569; these read DTPGH and NKID. Positions 566 to 569 are G4; it reads NKID. Residues 602 to 604 are G5; that stretch reads SAK.

Belongs to the TRAFAC class translation factor GTPase superfamily. Classic translation factor GTPase family. IF-2 subfamily.

It is found in the cytoplasm. In terms of biological role, one of the essential components for the initiation of protein synthesis. Protects formylmethionyl-tRNA from spontaneous hydrolysis and promotes its binding to the 30S ribosomal subunits. Also involved in the hydrolysis of GTP during the formation of the 70S ribosomal complex. In Brucella ovis (strain ATCC 25840 / 63/290 / NCTC 10512), this protein is Translation initiation factor IF-2.